Reading from the N-terminus, the 251-residue chain is E3 ubiquitin-protein ligase MARCHF3 (251 aa).

The segment at 61 to 121 adopts an RING-CH-type zinc-finger fold; that stretch reads QSFNDRPMCR…ELCHFRFSVE (61 aa). Zn(2+) contacts are provided by cysteine 69, cysteine 72, cysteine 85, cysteine 87, histidine 95, cysteine 98, cysteine 111, and cysteine 114. The next 2 helical transmembrane spans lie at 143-163 and 180-200; these read LFGD…SGWL and AVGL…WTLV.

Its subcellular location is the cytoplasmic vesicle membrane. It is found in the early endosome membrane. It catalyses the reaction S-ubiquitinyl-[E2 ubiquitin-conjugating enzyme]-L-cysteine + [acceptor protein]-L-lysine = [E2 ubiquitin-conjugating enzyme]-L-cysteine + N(6)-ubiquitinyl-[acceptor protein]-L-lysine.. Its pathway is protein modification; protein ubiquitination. Its function is as follows. E3 ubiquitin-protein ligase which may be involved in endosomal trafficking. E3 ubiquitin ligases accept ubiquitin from an E2 ubiquitin-conjugating enzyme in the form of a thioester and then directly transfer the ubiquitin to targeted substrates. The chain is E3 ubiquitin-protein ligase MARCHF3 (marchf3) from Xenopus tropicalis (Western clawed frog).